Here is a 465-residue protein sequence, read N- to C-terminus: MAFEDYFSFQIFFIFLRESLEIVVIVSILLTIVKQGLSVEDDSPFEGSSSSAGLPSPNTNTNADSTTAFLQAGPSDGNAIGTSATAANNKSRPLNVEEEEEIYEYSNELRDQDRESDEHTADNVKLYQKLKIQILAGGAFGLLLCMLIGGAFVSIFYHIGTDLWTLSEHYYEGVLSLVASVIISVMGLFFLRMGKLREKFRVKLASIIYSKDNNLLGNKTQKGVKFSEKYSFFILPFITTLREGLEAVVFIGGIGIDQPLSSIPLSMVLATAISTVFGIFFFRYSSSLSLKICLVVATCFLYLIAAGLFSKGVWQLELQDYVNKCNGQDMSEVGNGPGSYDISRSVWHVNCCNGEKDGGWMIFTAIFGWTNSATVGSVISYNAYWLVLICALKLLMIEEKYGYIPYLPISWQKKRIMKRLSIAKASLDLKHHTSELNSSTSEPDSQRRSKDSSVPLIIDSSGSAN.

Over 1–11 (MAFEDYFSFQI) the chain is Vacuolar. Residues 12–32 (FFIFLRESLEIVVIVSILLTI) traverse the membrane as a helical segment. Topologically, residues 33–135 (VKQGLSVEDD…LYQKLKIQIL (103 aa)) are cytoplasmic. Residues 44-66 (PFEGSSSSAGLPSPNTNTNADST) are disordered. Residues 46-66 (EGSSSSAGLPSPNTNTNADST) are compositionally biased toward polar residues. Residues 136 to 156 (AGGAFGLLLCMLIGGAFVSIF) form a helical membrane-spanning segment. At 157–170 (YHIGTDLWTLSEHY) the chain is on the vacuolar side. The chain crosses the membrane as a helical span at residues 171-191 (YEGVLSLVASVIISVMGLFFL). The Cytoplasmic portion of the chain corresponds to 192 to 289 (RMGKLREKFR…FFFRYSSSLS (98 aa)). A helical membrane pass occupies residues 290 to 310 (LKICLVVATCFLYLIAAGLFS). Residues 311–358 (KGVWQLELQDYVNKCNGQDMSEVGNGPGSYDISRSVWHVNCCNGEKDG) are Vacuolar-facing. Residues 359 to 379 (GWMIFTAIFGWTNSATVGSVI) form a helical membrane-spanning segment. At 380-465 (SYNAYWLVLI…LIIDSSGSAN (86 aa)) the chain is on the cytoplasmic side. Residues 433–465 (TSELNSSTSEPDSQRRSKDSSVPLIIDSSGSAN) form a disordered region. Phosphoserine is present on residues serine 449 and serine 453.

The protein belongs to the oxidase-dependent Fe transporter (OFeT) (TC 9.A.10.1) family. As to quaternary structure, interacts with FET5.

It is found in the vacuole membrane. In terms of biological role, high affinity iron transporter probably involved in transport of intravacuolar stores of iron. In Saccharomyces cerevisiae (strain ATCC 204508 / S288c) (Baker's yeast), this protein is Iron transporter FTH1 (FTH1).